A 217-amino-acid chain; its full sequence is MGQKINPLGFRLGTTQNHHSVWFAQPKSYSEGLQEDQKIRDCIKNYVQKNKRIPLVEGIARIEIQKRIDLIQVIIYMGFPKLLIEDRPRGIEELQINLQKEFNSMNRKLNIAITRIAKPYGQPNILAEYIAGQLKSRVSFRKAMKKAIELTEQTDTKGIQVQIAGRIDGKEIARVEWIREGRVPLQTIRAKIDYCSYTVRTIYGVLGIKIWIFVDEE.

The region spanning 43-117 (IKNYVQKNKR…KLNIAITRIA (75 aa)) is the KH type-2 domain.

This sequence belongs to the universal ribosomal protein uS3 family. As to quaternary structure, part of the 30S ribosomal subunit.

It localises to the plastid. Its subcellular location is the chloroplast. This Platanus occidentalis (Sycamore) protein is Small ribosomal subunit protein uS3c (rps3).